A 71-amino-acid polypeptide reads, in one-letter code: Small ribosomal subunit protein bS18 (71 aa).

It belongs to the bacterial ribosomal protein bS18 family. In terms of assembly, part of the 30S ribosomal subunit. Forms a tight heterodimer with protein bS6.

Its function is as follows. Binds as a heterodimer with protein bS6 to the central domain of the 16S rRNA, where it helps stabilize the platform of the 30S subunit. The protein is Small ribosomal subunit protein bS18 of Nostoc sp. (strain PCC 7120 / SAG 25.82 / UTEX 2576).